The sequence spans 557 residues: Tektin-5 (557 aa).

Residues 302 to 386 adopt a coiled-coil conformation; that stretch reads DNIRHAQNMR…LLERAIVAKE (85 aa). A run of 6 repeats spans residues 507–512, 513–518, 519–524, 525–530, 531–536, and 537–541. The 6 X 6 AA approximate tandem repeats of C-[GSK]-G-[GSPH]-A-[SLP] stretch occupies residues 507-541; the sequence is CSGSALCKGPASCGGGASCGGGASCGGHAPCGSAL.

Belongs to the tektin family. In terms of assembly, microtubule inner protein component of sperm flagellar doublet microtubules. Interacts with TEKT3. Post-translationally, ubiquitinated, leading to its degradation. Deubiquitinated by USP16, promoting its stability. Strongly expressed in germ cells of the testis (at protein level). Expressed in spermatozoa. Also detected in brain.

Its subcellular location is the cytoplasm. The protein resides in the cytoskeleton. It is found in the flagellum axoneme. Functionally, sperm-specific microtubule inner protein (MIP) part of the dynein-decorated doublet microtubules (DMTs) in flagellar axoneme. Forms an extensive interaction network in different conformations that reinforces the helix bundle composed by other tektin proteins (TEKT1 to TEKT4) and MIPs to anchor the tektin bundle onto the tubulin wall of A-tubule of the sperm flagellum. This Mus musculus (Mouse) protein is Tektin-5.